The following is a 469-amino-acid chain: Pancreatic lipase-related protein 2 (469 aa).

A signal peptide spans 1-17 (MLPSWTIGLLLLATVRG). Cysteines 21 and 27 form a disulfide. Asparagine 71 carries N-linked (GlcNAc...) asparagine glycosylation. A required for galactolipase activity region spans residues 93–105 (IHGFIDDGDSGWP). Cysteine 109 and cysteine 120 are disulfide-bonded. The active-site Nucleophile is the serine 171. Aspartate 195 serves as the catalytic Charge relay system. Ca(2+) contacts are provided by glutamate 206, arginine 209, aspartate 211, and aspartate 214. Cysteine 256 and cysteine 280 are disulfide-bonded. Residues 257 to 279 (QKNILSTIIDINGIWQGIQDFVA) form a required for galactolipase activity region. Histidine 282 functions as the Charge relay system in the catalytic mechanism. 2 cysteine pairs are disulfide-bonded: cysteine 304/cysteine 315 and cysteine 318/cysteine 323. Asparagine 353, asparagine 399, and asparagine 455 each carry an N-linked (GlcNAc...) asparagine glycan. A PLAT domain is found at 357–469 (WRYRVSVTLA…ENALQTLYPC (113 aa)). Cysteine 453 and cysteine 469 are oxidised to a cystine.

The protein belongs to the AB hydrolase superfamily. Lipase family.

The protein resides in the secreted. It is found in the zymogen granule membrane. Its subcellular location is the cell projection. The protein localises to the neuron projection. It catalyses the reaction a triacylglycerol + H2O = a diacylglycerol + a fatty acid + H(+). The enzyme catalyses a 1,2-diacyl-3-O-(beta-D-galactosyl)-sn-glycerol + 2 H2O = 3-beta-D-galactosyl-sn-glycerol + 2 a fatty acid + 2 H(+). The catalysed reaction is 1,2,3-tri-(9Z-octadecenoyl)-glycerol + H2O = di-(9Z)-octadecenoylglycerol + (9Z)-octadecenoate + H(+). It carries out the reaction di-(9Z)-octadecenoylglycerol + H2O = (9Z-octadecenoyl)-glycerol + (9Z)-octadecenoate + H(+). It catalyses the reaction (9Z-octadecenoyl)-glycerol + H2O = glycerol + (9Z)-octadecenoate + H(+). The enzyme catalyses 1-(9Z-octadecenoyl)-glycerol + H2O = glycerol + (9Z)-octadecenoate + H(+). The catalysed reaction is 1,2,3-tripropanoylglycerol + H2O = dipropanoylglycerol + propanoate + H(+). It carries out the reaction 1,2,3-tributanoylglycerol + H2O = dibutanoylglycerol + butanoate + H(+). It catalyses the reaction 1,2,3-trioctanoylglycerol + H2O = dioctanoylglycerol + octanoate + H(+). The enzyme catalyses 1,2-didecanoylglycerol + H2O = decanoylglycerol + decanoate + H(+). The catalysed reaction is long chain 1,2-diacyl-3-O-beta-D-galactosyl-sn-glycerol + H2O = long chain acyl-3-O-beta-D-galactosyl-sn-glycerol + a fatty acid + H(+). It carries out the reaction 1,2-dioctanoyl-3-O-beta-D-galactosyl-sn-glycerol + H2O = octanoyl-3-(beta-D-galactosyl)-sn-glycerol + octanoate + H(+). It catalyses the reaction 1,2-didodecanoyl-3-beta-D-galactosyl-sn-glycerol + H2O = dodecanoyl-3-beta-D-galactosyl-sn-glycerol + dodecanoate + H(+). The enzyme catalyses 1-beta-D-galactosyl-2,3-didodecanoyl-sn-glycerol + H2O = 1-beta-D-galactosyl-dodecanoyl-sn-glycerol + dodecanoate + H(+). The catalysed reaction is a 1,2-diacyl-3-O-[alpha-D-galactosyl-(1-&gt;6)-beta-D-galactosyl]-sn-glycerol + H2O = acyl-3-O-[alpha-D-galactosyl-(1-&gt;6)-beta-D-galactosyl]-sn-glycerol + a fatty acid + H(+). It carries out the reaction long chain 1,2-diacyl-3-O-[alpha-D-galactosyl-(1-&gt;6)-beta-D-galactosyl]-sn-glycerol + H2O = long chain acyl-3-O-[alpha-D-galactosyl-(1-&gt;6)-beta-D-galactosyl]-sn-glycerol + a fatty acid + H(+). It catalyses the reaction 1,2-dioctanoyl-3-O-[alpha-D-galactosyl-(1-&gt;6)-beta-D-galactosyl]-sn-glycerol + H2O = octanoyl-3-O-[alpha-D-galactosyl-(1-&gt;6)-beta-D-galactosyl]-sn-glycerol + octanoate + H(+). The enzyme catalyses 1,2-didodecanoyl-3-O-[alpha-D-galactosyl-(1-&gt;6)-beta-D-galactosyl]-sn-glycerol + H2O = dodecanoyl-3-O-[alpha-D-galactosyl-(1-&gt;6)-beta-D-galactosyl]-sn-glycerol + dodecanoate + H(+). The catalysed reaction is a 1,2-diacyl-sn-glycero-3-phosphocholine + H2O = a monoacyl-sn-glycero-3-phosphocholine + a fatty acid + H(+). The protein operates within glycerolipid metabolism; triacylglycerol degradation. It functions in the pathway glycolipid metabolism. Functionally, lipase that primarily hydrolyzes triglycerides and galactosylglycerides. In neonates, may play a major role in pancreatic digestion of dietary fats such as milk fat globules enriched in long-chain triglycerides. Hydrolyzes short-, medium- and long-chain fatty acyls in triglycerides without apparent positional specificity. Can completely deacylate triacylglycerols. When the liver matures and bile salt synthesis increases, likely functions mainly as a galactolipase and monoacylglycerol lipase. Hydrolyzes monogalactosyldiglycerols (MGDG) and digalactosyldiacylglycerols (DGDG) present in a plant-based diet, releasing long-chain polyunsaturated fatty acids. Hydrolyzes medium- and long-chain fatty acyls in galactolipids. May act together with LIPF to hydrolyze partially digested triglycerides. Hydrolyzes long-chain monoglycerides with high efficiency. In cytotoxic T cells, contributes to perforin-dependent cell lysis, but is unlikely to mediate direct cytotoxicity. Also has low phospholipase activity. In neurons, required for the localization of the phospholipid 1-oleoyl-2-palmitoyl-PC (OPPC) to neurite tips through acyl chain remodeling of membrane phospholipids. The resulting OPPC-rich lipid membrane domain recruits the t-SNARE protein STX4 by selectively interacting with the STX4 transmembrane domain and this promotes surface expression of the dopamine transporter SLC6A3/DAT at neurite tips by facilitating fusion of SLC6A3-containing transport vesicles with the plasma membrane. In Bos taurus (Bovine), this protein is Pancreatic lipase-related protein 2.